The following is a 960-amino-acid chain: Ran GTPase-activating protein 2 (960 aa).

LRR repeat units follow at residues 69–92 (HLNL…LIAE), 132–156 (GCRL…LYNF), 162–185 (LYSL…VGKA), 227–254 (LGTL…AFRM), and 313–340 (RDCL…CFNS). The segment at 370–408 (NIDFGRRGDDELLSSDEEEEQGAEDASMEEDAFNTSRET) is disordered. The span at 380–401 (ELLSSDEEEEQGAEDASMEEDA) shows a compositional bias: acidic residues. 4 LRR repeats span residues 475–498 (ASSM…VIAK), 538–561 (GCKI…ALKD), 568–595 (SFSL…LTEC), and 663–685 (NRNL…KALA). Residues 777-819 (PENVNVGDEDDDLGSLDGDQEEYNSKSSDSEDADLDDDDEDDD) form a disordered region. Acidic residues-rich tracts occupy residues 783 to 798 (GDED…DQEE) and 806 to 819 (SEDA…EDDD).

It is found in the nucleus. Functionally, GTPase system comprising ran-1, ran-2 and ran-3 is essential in nucleocytoplasmic trafficking. Ran-2 is a GTPase activator for the nuclear RAS-related regulatory protein Ran, converting it to the putatively inactive GDP-bound state. Required for correct chromosome alignment and segregation on the metaphase plate. The chain is Ran GTPase-activating protein 2 (ran-2) from Caenorhabditis elegans.